A 228-amino-acid polypeptide reads, in one-letter code: Thiamine-phosphate synthase (228 aa).

4-amino-2-methyl-5-(diphosphooxymethyl)pyrimidine-binding positions include 57 to 61 (QLRDK) and Asn89. The Mg(2+) site is built by Asp90 and Asp109. Ser128 provides a ligand contact to 4-amino-2-methyl-5-(diphosphooxymethyl)pyrimidine. 2-[(2R,5Z)-2-carboxy-4-methylthiazol-5(2H)-ylidene]ethyl phosphate is bound at residue 154–156 (TPS). Lys157 provides a ligand contact to 4-amino-2-methyl-5-(diphosphooxymethyl)pyrimidine. Residues Gly185 and 205-206 (IS) each bind 2-[(2R,5Z)-2-carboxy-4-methylthiazol-5(2H)-ylidene]ethyl phosphate.

It belongs to the thiamine-phosphate synthase family. It depends on Mg(2+) as a cofactor.

The enzyme catalyses 2-[(2R,5Z)-2-carboxy-4-methylthiazol-5(2H)-ylidene]ethyl phosphate + 4-amino-2-methyl-5-(diphosphooxymethyl)pyrimidine + 2 H(+) = thiamine phosphate + CO2 + diphosphate. It catalyses the reaction 2-(2-carboxy-4-methylthiazol-5-yl)ethyl phosphate + 4-amino-2-methyl-5-(diphosphooxymethyl)pyrimidine + 2 H(+) = thiamine phosphate + CO2 + diphosphate. The catalysed reaction is 4-methyl-5-(2-phosphooxyethyl)-thiazole + 4-amino-2-methyl-5-(diphosphooxymethyl)pyrimidine + H(+) = thiamine phosphate + diphosphate. It functions in the pathway cofactor biosynthesis; thiamine diphosphate biosynthesis; thiamine phosphate from 4-amino-2-methyl-5-diphosphomethylpyrimidine and 4-methyl-5-(2-phosphoethyl)-thiazole: step 1/1. Functionally, condenses 4-methyl-5-(beta-hydroxyethyl)thiazole monophosphate (THZ-P) and 2-methyl-4-amino-5-hydroxymethyl pyrimidine pyrophosphate (HMP-PP) to form thiamine monophosphate (TMP). This is Thiamine-phosphate synthase from Roseiflexus castenholzii (strain DSM 13941 / HLO8).